Consider the following 426-residue polypeptide: Histidine--tRNA ligase (426 aa).

This sequence belongs to the class-II aminoacyl-tRNA synthetase family.

It localises to the cytoplasm. The catalysed reaction is tRNA(His) + L-histidine + ATP = L-histidyl-tRNA(His) + AMP + diphosphate + H(+). The chain is Histidine--tRNA ligase from Sulfurisphaera tokodaii (strain DSM 16993 / JCM 10545 / NBRC 100140 / 7) (Sulfolobus tokodaii).